The primary structure comprises 294 residues: tRNA dimethylallyltransferase (294 aa).

11-18 contacts ATP; sequence GPTAVGKT. Residue 13 to 18 participates in substrate binding; it reads TAVGKT. The interval 36 to 39 is interaction with substrate tRNA; sequence DSQQ.

Belongs to the IPP transferase family. As to quaternary structure, monomer. The cofactor is Mg(2+).

It carries out the reaction adenosine(37) in tRNA + dimethylallyl diphosphate = N(6)-dimethylallyladenosine(37) in tRNA + diphosphate. Catalyzes the transfer of a dimethylallyl group onto the adenine at position 37 in tRNAs that read codons beginning with uridine, leading to the formation of N6-(dimethylallyl)adenosine (i(6)A). The protein is tRNA dimethylallyltransferase of Lactococcus lactis subsp. cremoris (strain SK11).